Reading from the N-terminus, the 352-residue chain is Holliday junction branch migration complex subunit RuvB (352 aa).

The large ATPase domain (RuvB-L) stretch occupies residues 4-191; it reads TDKLAAPARV…FGIVARLEFY (188 aa). Residues Leu30, Arg31, Gly72, Lys75, Thr76, Thr77, 138 to 140, Arg181, Tyr191, and Arg228 each bind ATP; that span reads EDY. Thr76 is a binding site for Mg(2+). A small ATPAse domain (RuvB-S) region spans residues 192–262; it reads TADELARIVT…MADAALAMLD (71 aa). A head domain (RuvB-H) region spans residues 265-352; it reads SVGFDLMDRK…SGASELFGDA (88 aa). DNA is bound by residues Arg301, Arg320, and Arg325.

Belongs to the RuvB family. As to quaternary structure, homohexamer. Forms an RuvA(8)-RuvB(12)-Holliday junction (HJ) complex. HJ DNA is sandwiched between 2 RuvA tetramers; dsDNA enters through RuvA and exits via RuvB. An RuvB hexamer assembles on each DNA strand where it exits the tetramer. Each RuvB hexamer is contacted by two RuvA subunits (via domain III) on 2 adjacent RuvB subunits; this complex drives branch migration. In the full resolvosome a probable DNA-RuvA(4)-RuvB(12)-RuvC(2) complex forms which resolves the HJ.

The protein resides in the cytoplasm. It carries out the reaction ATP + H2O = ADP + phosphate + H(+). Functionally, the RuvA-RuvB-RuvC complex processes Holliday junction (HJ) DNA during genetic recombination and DNA repair, while the RuvA-RuvB complex plays an important role in the rescue of blocked DNA replication forks via replication fork reversal (RFR). RuvA specifically binds to HJ cruciform DNA, conferring on it an open structure. The RuvB hexamer acts as an ATP-dependent pump, pulling dsDNA into and through the RuvAB complex. RuvB forms 2 homohexamers on either side of HJ DNA bound by 1 or 2 RuvA tetramers; 4 subunits per hexamer contact DNA at a time. Coordinated motions by a converter formed by DNA-disengaged RuvB subunits stimulates ATP hydrolysis and nucleotide exchange. Immobilization of the converter enables RuvB to convert the ATP-contained energy into a lever motion, pulling 2 nucleotides of DNA out of the RuvA tetramer per ATP hydrolyzed, thus driving DNA branch migration. The RuvB motors rotate together with the DNA substrate, which together with the progressing nucleotide cycle form the mechanistic basis for DNA recombination by continuous HJ branch migration. Branch migration allows RuvC to scan DNA until it finds its consensus sequence, where it cleaves and resolves cruciform DNA. In Cupriavidus necator (strain ATCC 17699 / DSM 428 / KCTC 22496 / NCIMB 10442 / H16 / Stanier 337) (Ralstonia eutropha), this protein is Holliday junction branch migration complex subunit RuvB.